A 315-amino-acid polypeptide reads, in one-letter code: Nucleotide-binding protein PsycPRwf_2129 (315 aa).

29–36 lines the ATP pocket; that stretch reads GRSGSGKT. 79 to 82 provides a ligand contact to GTP; sequence DIRT.

This sequence belongs to the RapZ-like family.

In terms of biological role, displays ATPase and GTPase activities. The chain is Nucleotide-binding protein PsycPRwf_2129 from Psychrobacter sp. (strain PRwf-1).